A 125-amino-acid polypeptide reads, in one-letter code: Small ribosomal subunit protein uS12 (125 aa).

At Asp89 the chain carries 3-methylthioaspartic acid.

It belongs to the universal ribosomal protein uS12 family. In terms of assembly, part of the 30S ribosomal subunit. Contacts proteins S8 and S17. May interact with IF1 in the 30S initiation complex.

Functionally, with S4 and S5 plays an important role in translational accuracy. Interacts with and stabilizes bases of the 16S rRNA that are involved in tRNA selection in the A site and with the mRNA backbone. Located at the interface of the 30S and 50S subunits, it traverses the body of the 30S subunit contacting proteins on the other side and probably holding the rRNA structure together. The combined cluster of proteins S8, S12 and S17 appears to hold together the shoulder and platform of the 30S subunit. In Acidovorax sp. (strain JS42), this protein is Small ribosomal subunit protein uS12.